The chain runs to 177 residues: Large ribosomal subunit protein uL6 (177 aa).

It belongs to the universal ribosomal protein uL6 family. In terms of assembly, part of the 50S ribosomal subunit.

This protein binds to the 23S rRNA, and is important in its secondary structure. It is located near the subunit interface in the base of the L7/L12 stalk, and near the tRNA binding site of the peptidyltransferase center. The sequence is that of Large ribosomal subunit protein uL6 from Acidovorax ebreus (strain TPSY) (Diaphorobacter sp. (strain TPSY)).